The chain runs to 94 residues: Endoribonuclease VapD 2 (94 aa).

Belongs to the VapD ribonuclease family. Homodimer.

Cleaves ssRNA, mostly between U:A. This Riemerella anatipestifer (Moraxella anatipestifer) protein is Endoribonuclease VapD 2.